A 232-amino-acid chain; its full sequence is Ubiquinone biosynthesis O-methyltransferase (232 aa).

4 residues coordinate S-adenosyl-L-methionine: Arg-36, Gly-55, Asp-76, and Met-120.

This sequence belongs to the methyltransferase superfamily. UbiG/COQ3 family.

The catalysed reaction is a 3-demethylubiquinol + S-adenosyl-L-methionine = a ubiquinol + S-adenosyl-L-homocysteine + H(+). The enzyme catalyses a 3-(all-trans-polyprenyl)benzene-1,2-diol + S-adenosyl-L-methionine = a 2-methoxy-6-(all-trans-polyprenyl)phenol + S-adenosyl-L-homocysteine + H(+). It functions in the pathway cofactor biosynthesis; ubiquinone biosynthesis. In terms of biological role, O-methyltransferase that catalyzes the 2 O-methylation steps in the ubiquinone biosynthetic pathway. This chain is Ubiquinone biosynthesis O-methyltransferase, found in Chromobacterium violaceum (strain ATCC 12472 / DSM 30191 / JCM 1249 / CCUG 213 / NBRC 12614 / NCIMB 9131 / NCTC 9757 / MK).